A 98-amino-acid chain; its full sequence is Small ribosomal subunit protein bS16 (98 aa).

Belongs to the bacterial ribosomal protein bS16 family.

In Pseudothermotoga lettingae (strain ATCC BAA-301 / DSM 14385 / NBRC 107922 / TMO) (Thermotoga lettingae), this protein is Small ribosomal subunit protein bS16.